A 65-amino-acid chain; its full sequence is Large ribosomal subunit protein bL33m (65 aa).

Residues 1-8 (MFLTTANL) constitute a mitochondrion transit peptide.

Belongs to the bacterial ribosomal protein bL33 family. Component of the mitochondrial ribosome large subunit (39S) which comprises a 16S rRNA and about 50 distinct proteins.

It is found in the mitochondrion. The protein is Large ribosomal subunit protein bL33m (mrpl33) of Tetraodon nigroviridis (Spotted green pufferfish).